We begin with the raw amino-acid sequence, 240 residues long: Ribonuclease HII (240 aa).

Residues 33–222 enclose the RNase H type-2 domain; that stretch reads GPVAGVDEVG…VRRIVTRSNT (190 aa). 3 residues coordinate a divalent metal cation: D39, E40, and D131.

It belongs to the RNase HII family. Requires Mn(2+) as cofactor. Mg(2+) serves as cofactor.

Its subcellular location is the cytoplasm. It carries out the reaction Endonucleolytic cleavage to 5'-phosphomonoester.. Endonuclease that specifically degrades the RNA of RNA-DNA hybrids. The protein is Ribonuclease HII of Mycobacterium leprae (strain Br4923).